The primary structure comprises 258 residues: 5'-nucleotidase SurE (258 aa).

Residues D16, D17, S47, and N99 each coordinate a divalent metal cation.

The protein belongs to the SurE nucleotidase family. It depends on a divalent metal cation as a cofactor.

It localises to the cytoplasm. The enzyme catalyses a ribonucleoside 5'-phosphate + H2O = a ribonucleoside + phosphate. Its function is as follows. Nucleotidase that shows phosphatase activity on nucleoside 5'-monophosphates. The sequence is that of 5'-nucleotidase SurE from Coxiella burnetii (strain CbuK_Q154) (Coxiella burnetii (strain Q154)).